The primary structure comprises 539 residues: GMP synthase [glutamine-hydrolyzing] (539 aa).

Positions 4-202 constitute a Glutamine amidotransferase type-1 domain; that stretch reads KILILDFGSQ…VLGICRAKAD (199 aa). The Nucleophile role is filled by Cys81. Active-site residues include His176 and Glu178. Residues 203-395 enclose the GMPS ATP-PPase domain; it reads WVMKDHIEEA…LGLPPEMVYR (193 aa). ATP is bound at residue 230–236; the sequence is SGGVDSS.

Homodimer.

The catalysed reaction is XMP + L-glutamine + ATP + H2O = GMP + L-glutamate + AMP + diphosphate + 2 H(+). The protein operates within purine metabolism; GMP biosynthesis; GMP from XMP (L-Gln route): step 1/1. Functionally, catalyzes the synthesis of GMP from XMP. The sequence is that of GMP synthase [glutamine-hydrolyzing] from Cupriavidus pinatubonensis (strain JMP 134 / LMG 1197) (Cupriavidus necator (strain JMP 134)).